The sequence spans 548 residues: Natural resistance-associated macrophage protein 1 (548 aa).

Residues 1–38 (MSGDTGPPKQGGTRYGSISSPPSPEPQQAPPGGTYLSE) form a disordered region. Residues 1 to 55 (MSGDTGPPKQGGTRYGSISSPPSPEPQQAPPGGTYLSEKIPIPDTESGTFSLRKL) lie on the Cytoplasmic side of the membrane. Residues 56–73 (WAFTGPGFLMSIAFLDPG) traverse the membrane as a helical segment. Topologically, residues 74–82 (NIESDLQAG) are extracellular. The chain crosses the membrane as a helical span at residues 83–102 (AVAGFKLLWVLLWATVLGLL). Topologically, residues 103–139 (CQRLAARLGVVTGKDLGEVCHLYYPKVPRILLWLTIE) are cytoplasmic. Residues 140-160 (LAIVGSDMQEVIGTAIAFSLL) form a helical membrane-spanning segment. Over 161-164 (SAGR) the chain is Extracellular. The helical transmembrane segment at 165-184 (IPLWGGVLITIVDAFFFLFL) threads the bilayer. The Cytoplasmic portion of the chain corresponds to 185 to 193 (DNYGLRKLE). The chain crosses the membrane as a helical span at residues 194–214 (AFFGFLITIMALTFGYEYVVA). The Extracellular portion of the chain corresponds to 215–237 (QPAQGALLQGLFLPSCPGCGQPE). A helical transmembrane segment spans residues 238 to 256 (LLQAVGIIGAIIMPHNIYL). At 257–284 (HSSLVKSREVDRSRRADIREANMYFLIE) the chain is on the cytoplasmic side. A helical membrane pass occupies residues 285–304 (ATIALSVSFLINLFVMAVFG). Over 305–346 (QAFYKQTNQAAFNICANSSLQDYAPIFPRNNLTVAVDIYQGG) the chain is Extracellular. N321 and N335 each carry an N-linked (GlcNAc...) asparagine glycan. A helical transmembrane segment spans residues 347–366 (VILGCLFGPAALYIWAVGLL). The Cytoplasmic segment spans residues 367–397 (AAGQSSTMTGTYAGQFVMEGFLKLRWSRFAR). Residues 398-415 (VLLTRSCAILPTVLLAVF) traverse the membrane as a helical segment. The Extracellular segment spans residues 416–426 (RDLRDLSGLND). Residues 427-447 (LLNVLQSLLLPFAVLPILTFT) traverse the membrane as a helical segment. Over 448 to 463 (SMPALMREFANGLVSK) the chain is Cytoplasmic. Residues 464–485 (VITSSIMVLVCAVNLYFVISYV) traverse the membrane as a helical segment. Over 486–493 (PSLPHPAY) the chain is Extracellular. A helical transmembrane segment spans residues 494-513 (FSLVALLAAAYLGLTTYLVW). Topologically, residues 514–548 (TCLITQGATLLAHSSHQRFLYGLPEEDQEKGRTSG) are cytoplasmic.

Belongs to the NRAMP family.

It localises to the late endosome membrane. Its subcellular location is the lysosome membrane. It catalyses the reaction Zn(2+)(in) + H(+)(out) = Zn(2+)(out) + H(+)(in). The catalysed reaction is Fe(2+)(in) + H(+)(out) = Fe(2+)(out) + H(+)(in). It carries out the reaction Mn(2+)(in) + H(+)(out) = Mn(2+)(out) + H(+)(in). In terms of biological role, macrophage-specific antiporter that fluxes metal ions in either direction against a proton gradient. Localized to late endosomal lysosomal membranes, delivers bivalent cations from the cytosol into these acidic compartments where they may directly affect antimicrobial activity. Involved in iron metabolism and host natural resistance to infection with intracellular parasites. Pathogen resistance involves sequestration of Fe(2+) and Mn(2+), cofactors of both prokaryotic and eukaryotic catalases and superoxide dismutases, not only to protect the macrophage against its own generation of reactive oxygen species, but to deny the cations to the pathogen for synthesis of its protective enzymes. This is Natural resistance-associated macrophage protein 1 (SLC11A1) from Bison bison (American bison).